The primary structure comprises 222 residues: Dense granule protein 3 (222 aa).

Transmembrane regions (helical) follow at residues 22-42 and 162-182; these read LIPFLVPFVVFLVAAALGGLA and IPGYFVVINAILAAYYIRKVL. Residues 219-222 carry the Prevents secretion from ER motif; the sequence is KKQT.

In terms of assembly, homodimer. Interacts (via N-terminus) with human host CAMLG (via N-terminus).

It is found in the cytoplasm. It localises to the host endoplasmic reticulum. The protein resides in the parasitophorous vacuole membrane. In terms of biological role, direct host-parasite interaction occurs at the cytoplasmic faces of the parasitophorous vacuole membrane (PVM) and the host endoplasmic reticulum (ER) membrane via GRA3 and host CAMLG association. Direct insertion of GRA3 ER retrieval motif into the host ER membrane contributes to the host ER recruitment to the PVM. In Toxoplasma gondii, this protein is Dense granule protein 3.